The chain runs to 165 residues: Chorismate pyruvate-lyase (165 aa).

M35, R77, L115, and E156 together coordinate substrate.

Belongs to the UbiC family. As to quaternary structure, monomer.

The protein localises to the cytoplasm. The enzyme catalyses chorismate = 4-hydroxybenzoate + pyruvate. It participates in cofactor biosynthesis; ubiquinone biosynthesis. Functionally, removes the pyruvyl group from chorismate, with concomitant aromatization of the ring, to provide 4-hydroxybenzoate (4HB) for the ubiquinone pathway. The polypeptide is Chorismate pyruvate-lyase (Enterobacter sp. (strain 638)).